The sequence spans 482 residues: tRNA sulfurtransferase (482 aa).

The region spanning 61 to 165 (LAIRDALTRI…DDRLLLIKGR (105 aa)) is the THUMP domain. ATP-binding positions include 183 to 184 (LI), Lys265, Gly287, and Gln296. A disulfide bridge links Cys344 with Cys456. A Rhodanese domain is found at 404-482 (FGPNDVILDI…GFENVKVYRP (79 aa)). The Cysteine persulfide intermediate role is filled by Cys456.

This sequence belongs to the ThiI family.

The protein resides in the cytoplasm. The catalysed reaction is [ThiI sulfur-carrier protein]-S-sulfanyl-L-cysteine + a uridine in tRNA + 2 reduced [2Fe-2S]-[ferredoxin] + ATP + H(+) = [ThiI sulfur-carrier protein]-L-cysteine + a 4-thiouridine in tRNA + 2 oxidized [2Fe-2S]-[ferredoxin] + AMP + diphosphate. The enzyme catalyses [ThiS sulfur-carrier protein]-C-terminal Gly-Gly-AMP + S-sulfanyl-L-cysteinyl-[cysteine desulfurase] + AH2 = [ThiS sulfur-carrier protein]-C-terminal-Gly-aminoethanethioate + L-cysteinyl-[cysteine desulfurase] + A + AMP + 2 H(+). It functions in the pathway cofactor biosynthesis; thiamine diphosphate biosynthesis. Functionally, catalyzes the ATP-dependent transfer of a sulfur to tRNA to produce 4-thiouridine in position 8 of tRNAs, which functions as a near-UV photosensor. Also catalyzes the transfer of sulfur to the sulfur carrier protein ThiS, forming ThiS-thiocarboxylate. This is a step in the synthesis of thiazole, in the thiamine biosynthesis pathway. The sulfur is donated as persulfide by IscS. This Salmonella enteritidis PT4 (strain P125109) protein is tRNA sulfurtransferase.